We begin with the raw amino-acid sequence, 238 residues long: Ribonuclease PH (238 aa).

Phosphate-binding positions include arginine 86 and 124–126 (GTR).

It belongs to the RNase PH family. Homohexameric ring arranged as a trimer of dimers.

The catalysed reaction is tRNA(n+1) + phosphate = tRNA(n) + a ribonucleoside 5'-diphosphate. Functionally, phosphorolytic 3'-5' exoribonuclease that plays an important role in tRNA 3'-end maturation. Removes nucleotide residues following the 3'-CCA terminus of tRNAs; can also add nucleotides to the ends of RNA molecules by using nucleoside diphosphates as substrates, but this may not be physiologically important. Probably plays a role in initiation of 16S rRNA degradation (leading to ribosome degradation) during starvation. This is Ribonuclease PH from Geobacter sulfurreducens (strain ATCC 51573 / DSM 12127 / PCA).